The sequence spans 275 residues: NADPH-dependent 7-cyano-7-deazaguanine reductase (275 aa).

Residue 81-83 (IES) coordinates substrate. 83 to 84 (SK) is a binding site for NADPH. The active-site Thioimide intermediate is cysteine 181. Catalysis depends on aspartate 188, which acts as the Proton donor. 220-221 (HE) is a substrate binding site. 249–250 (RG) is an NADPH binding site.

The protein belongs to the GTP cyclohydrolase I family. QueF type 2 subfamily. As to quaternary structure, homodimer.

The protein localises to the cytoplasm. It carries out the reaction 7-aminomethyl-7-carbaguanine + 2 NADP(+) = 7-cyano-7-deazaguanine + 2 NADPH + 3 H(+). It participates in tRNA modification; tRNA-queuosine biosynthesis. Functionally, catalyzes the NADPH-dependent reduction of 7-cyano-7-deazaguanine (preQ0) to 7-aminomethyl-7-deazaguanine (preQ1). The protein is NADPH-dependent 7-cyano-7-deazaguanine reductase of Xylella fastidiosa (strain 9a5c).